Reading from the N-terminus, the 343-residue chain is N-acetyl-gamma-glutamyl-phosphate reductase (343 aa).

Cys147 is an active-site residue.

This sequence belongs to the NAGSA dehydrogenase family. Type 1 subfamily.

Its subcellular location is the cytoplasm. It carries out the reaction N-acetyl-L-glutamate 5-semialdehyde + phosphate + NADP(+) = N-acetyl-L-glutamyl 5-phosphate + NADPH + H(+). It functions in the pathway amino-acid biosynthesis; L-arginine biosynthesis; N(2)-acetyl-L-ornithine from L-glutamate: step 3/4. Its function is as follows. Catalyzes the NADPH-dependent reduction of N-acetyl-5-glutamyl phosphate to yield N-acetyl-L-glutamate 5-semialdehyde. The protein is N-acetyl-gamma-glutamyl-phosphate reductase of Staphylococcus aureus (strain USA300).